Reading from the N-terminus, the 335-residue chain is NADH-quinone oxidoreductase subunit H (335 aa).

8 helical membrane-spanning segments follow: residues 11 to 31 (VILT…AGAL), 81 to 101 (VIFT…FAII), 114 to 134 (IGLL…LFAG), 154 to 174 (VSYE…VGSF), 187 to 207 (LWFI…GVAV), 238 to 258 (FFVG…TLFF), 270 to 290 (QLSF…FILL), and 307 to 327 (WKFC…IVLW).

Belongs to the complex I subunit 1 family. In terms of assembly, NDH-1 is composed of 13 different subunits. Subunits NuoA, H, J, K, L, M, N constitute the membrane sector of the complex.

Its subcellular location is the cell inner membrane. It catalyses the reaction a quinone + NADH + 5 H(+)(in) = a quinol + NAD(+) + 4 H(+)(out). In terms of biological role, NDH-1 shuttles electrons from NADH, via FMN and iron-sulfur (Fe-S) centers, to quinones in the respiratory chain. The immediate electron acceptor for the enzyme in this species is believed to be ubiquinone. Couples the redox reaction to proton translocation (for every two electrons transferred, four hydrogen ions are translocated across the cytoplasmic membrane), and thus conserves the redox energy in a proton gradient. This subunit may bind ubiquinone. In Pseudomonas fluorescens (strain Pf0-1), this protein is NADH-quinone oxidoreductase subunit H.